The chain runs to 176 residues: Replication restart protein PriC (176 aa).

This sequence belongs to the PriC family. In terms of assembly, component of the replication restart primosome, which is composed of PriA, PriB, PriC, DnaB and DnaT; DnaG primase associates transiently with this complex. Interacts with the C-terminus of SSB; this interaction is required to load the main replicative helicase onto substrate replication forks. Interacts with helicase DnaB alone and in the DnaB-DnaC complex, probably 1:1 binding with DnaB. Interacts with DnaT.

Functionally, involved in the restart of stalled replication forks, which reloads the DnaB replicative helicase on sites other than the origin of replication. Recognizes abandoned replication forks and remodels DNA single-stranded binding protein (SSB) on ssDNA to uncover a loading site for DnaB. There are several restart pathways, the PriA-PriC pathway is a minor restart pathway. Part of the minor PriC-Rep pathway for restart of stalled replication forks, which has a different substrate specificity than PriA. Part of the major restart pathway with PriA, PriB, DnaB, DnaT and DnaG primase. priB and priC have redundant roles in the cell. Binds 7-9 nucleotides of single-stranded (ss)DNA. The protein is Replication restart protein PriC of Klebsiella pneumoniae subsp. pneumoniae (strain ATCC 700721 / MGH 78578).